Here is a 314-residue protein sequence, read N- to C-terminus: Lipoyl synthase (314 aa).

7 residues coordinate [4Fe-4S] cluster: C61, C66, C72, C87, C91, C94, and S301. The Radical SAM core domain occupies 73–290; it reads FGRGTATFMI…ERIATNLGFS (218 aa).

This sequence belongs to the radical SAM superfamily. Lipoyl synthase family. The cofactor is [4Fe-4S] cluster.

It localises to the cytoplasm. The catalysed reaction is [[Fe-S] cluster scaffold protein carrying a second [4Fe-4S](2+) cluster] + N(6)-octanoyl-L-lysyl-[protein] + 2 oxidized [2Fe-2S]-[ferredoxin] + 2 S-adenosyl-L-methionine + 4 H(+) = [[Fe-S] cluster scaffold protein] + N(6)-[(R)-dihydrolipoyl]-L-lysyl-[protein] + 4 Fe(3+) + 2 hydrogen sulfide + 2 5'-deoxyadenosine + 2 L-methionine + 2 reduced [2Fe-2S]-[ferredoxin]. It functions in the pathway protein modification; protein lipoylation via endogenous pathway; protein N(6)-(lipoyl)lysine from octanoyl-[acyl-carrier-protein]: step 2/2. Catalyzes the radical-mediated insertion of two sulfur atoms into the C-6 and C-8 positions of the octanoyl moiety bound to the lipoyl domains of lipoate-dependent enzymes, thereby converting the octanoylated domains into lipoylated derivatives. This chain is Lipoyl synthase, found in Nitrosomonas eutropha (strain DSM 101675 / C91 / Nm57).